We begin with the raw amino-acid sequence, 279 residues long: MTKADIIFKENIRKIMEEGVFSENARPRYKDGNVANSKYVTGAFAEYDLSKGEFPITTLRPIPIKSAIKEILWIYQDQTNDLSVLQEKYGVQYWNDWEVEGTGTIGERYGAIVKKHDIISKILKQLEENPWNRRNVISLWDYEAFDQSAGLLPCAFQTLFDVRRVDGEIYLDATLTQRSNDMLVAHHINAMQYVALQMMIAKHFGWKVGKFFYFINNLHIYDNQFEQAEELLRRTPSEVEPRLVLNVPDGTNFFDIRAEDFELVDYNPVKPQLKFDLAI.

133-134 lines the dUMP pocket; it reads RR. Cys154 acts as the Nucleophile in catalysis. Residues 178–181, Asn189, and 219–221 contribute to the dUMP site; these read RSND and HIY. Position 181 (Asp181) interacts with (6R)-5,10-methylene-5,6,7,8-tetrahydrofolate. (6R)-5,10-methylene-5,6,7,8-tetrahydrofolate is bound at residue Ala278.

Belongs to the thymidylate synthase family. Bacterial-type ThyA subfamily. In terms of assembly, homodimer.

It localises to the cytoplasm. It carries out the reaction dUMP + (6R)-5,10-methylene-5,6,7,8-tetrahydrofolate = 7,8-dihydrofolate + dTMP. The protein operates within pyrimidine metabolism; dTTP biosynthesis. In terms of biological role, catalyzes the reductive methylation of 2'-deoxyuridine-5'-monophosphate (dUMP) to 2'-deoxythymidine-5'-monophosphate (dTMP) while utilizing 5,10-methylenetetrahydrofolate (mTHF) as the methyl donor and reductant in the reaction, yielding dihydrofolate (DHF) as a by-product. This enzymatic reaction provides an intracellular de novo source of dTMP, an essential precursor for DNA biosynthesis. In Streptococcus suis (strain 05ZYH33), this protein is Thymidylate synthase.